The sequence spans 454 residues: tRNA modification GTPase MnmE (454 aa).

(6S)-5-formyl-5,6,7,8-tetrahydrofolate contacts are provided by Arg-26, Glu-84, and Lys-123. Positions 219–378 constitute a TrmE-type G domain; the sequence is GLQVVIAGKP…LVDAITAHAG (160 aa). Asn-229 provides a ligand contact to K(+). GTP contacts are provided by residues 229-234, 248-254, and 273-276; these read NAGKSS, TDIAGTT, and DTAG. Ser-233 provides a ligand contact to Mg(2+). The K(+) site is built by Thr-248, Ile-250, and Thr-253. Thr-254 is a Mg(2+) binding site. Lys-454 lines the (6S)-5-formyl-5,6,7,8-tetrahydrofolate pocket.

The protein belongs to the TRAFAC class TrmE-Era-EngA-EngB-Septin-like GTPase superfamily. TrmE GTPase family. In terms of assembly, homodimer. Heterotetramer of two MnmE and two MnmG subunits. Requires K(+) as cofactor.

It is found in the cytoplasm. Functionally, exhibits a very high intrinsic GTPase hydrolysis rate. Involved in the addition of a carboxymethylaminomethyl (cmnm) group at the wobble position (U34) of certain tRNAs, forming tRNA-cmnm(5)s(2)U34. The protein is tRNA modification GTPase MnmE of Acinetobacter baumannii (strain ATCC 17978 / DSM 105126 / CIP 53.77 / LMG 1025 / NCDC KC755 / 5377).